Consider the following 1905-residue polypeptide: von Willebrand factor A domain-containing protein 8 (1905 aa).

The transit peptide at 1–45 directs the protein to the mitochondrion; it reads MQSRLLLLGAPGGLGDVASRRVRLLLRQVLRGRPGGDQQRLEVRL. Residues 1-260 form an interaction with PEX7 region; it reads MQSRLLLLGA…PLDPPLRSRF (260 aa). 446 to 453 contributes to the ATP binding site; it reads GGKGCGKT. Positions 1541–1560 are enriched in basic and acidic residues; it reads ERDSNEDVSDPKHGKEDPDN. Positions 1541 to 1583 are disordered; that stretch reads ERDSNEDVSDPKHGKEDPDNMPHVGGNTWAGGTGGRDTAGLGG. Positions 1568–1583 are enriched in gly residues; sequence TWAGGTGGRDTAGLGG. Residues 1714–1896 form the VWFA domain; the sequence is RLRLVVDVSG…KKIPQILQQI (183 aa).

Monomer. Interacts with PEX7. Interacts with PEX5 in a PEX7-dependent manner. In terms of tissue distribution, isoform 1 is predominantly expressed in liver, kidney, pancreas, heart, and skeletal muscle (at protein level).

It is found in the mitochondrion. Exhibits ATPase activity in vitro. The sequence is that of von Willebrand factor A domain-containing protein 8 (Vwa8) from Mus musculus (Mouse).